The sequence spans 227 residues: Cytochrome c oxidase subunit 2 (227 aa).

The Mitochondrial intermembrane segment spans residues 1–14; sequence MAYPFQLGLQDATS. Residues 15–45 form a helical membrane-spanning segment; that stretch reads PIMEELLHFHDHTLMIVFLISSLVLYIISLM. At 46–59 the chain is on the mitochondrial matrix side; the sequence is LTTKLTHTSTMDAQ. The chain crosses the membrane as a helical span at residues 60–87; it reads EVETVWTILPAIILILIALPSLRILYMM. The Mitochondrial intermembrane portion of the chain corresponds to 88 to 227; the sequence is DEINNPSLTV…YFETWSAVMV (140 aa). 6 residues coordinate Cu cation: His-161, Cys-196, Glu-198, Cys-200, His-204, and Met-207. Glu-198 is a binding site for Mg(2+). Residue Tyr-218 is modified to Phosphotyrosine.

Belongs to the cytochrome c oxidase subunit 2 family. As to quaternary structure, component of the cytochrome c oxidase (complex IV, CIV), a multisubunit enzyme composed of 14 subunits. The complex is composed of a catalytic core of 3 subunits MT-CO1, MT-CO2 and MT-CO3, encoded in the mitochondrial DNA, and 11 supernumerary subunits COX4I, COX5A, COX5B, COX6A, COX6B, COX6C, COX7A, COX7B, COX7C, COX8 and NDUFA4, which are encoded in the nuclear genome. The complex exists as a monomer or a dimer and forms supercomplexes (SCs) in the inner mitochondrial membrane with NADH-ubiquinone oxidoreductase (complex I, CI) and ubiquinol-cytochrome c oxidoreductase (cytochrome b-c1 complex, complex III, CIII), resulting in different assemblies (supercomplex SCI(1)III(2)IV(1) and megacomplex MCI(2)III(2)IV(2)). Found in a complex with TMEM177, COA6, COX18, COX20, SCO1 and SCO2. Interacts with TMEM177 in a COX20-dependent manner. Interacts with COX20. Interacts with COX16. Requires Cu cation as cofactor.

The protein localises to the mitochondrion inner membrane. It carries out the reaction 4 Fe(II)-[cytochrome c] + O2 + 8 H(+)(in) = 4 Fe(III)-[cytochrome c] + 2 H2O + 4 H(+)(out). Functionally, component of the cytochrome c oxidase, the last enzyme in the mitochondrial electron transport chain which drives oxidative phosphorylation. The respiratory chain contains 3 multisubunit complexes succinate dehydrogenase (complex II, CII), ubiquinol-cytochrome c oxidoreductase (cytochrome b-c1 complex, complex III, CIII) and cytochrome c oxidase (complex IV, CIV), that cooperate to transfer electrons derived from NADH and succinate to molecular oxygen, creating an electrochemical gradient over the inner membrane that drives transmembrane transport and the ATP synthase. Cytochrome c oxidase is the component of the respiratory chain that catalyzes the reduction of oxygen to water. Electrons originating from reduced cytochrome c in the intermembrane space (IMS) are transferred via the dinuclear copper A center (CU(A)) of subunit 2 and heme A of subunit 1 to the active site in subunit 1, a binuclear center (BNC) formed by heme A3 and copper B (CU(B)). The BNC reduces molecular oxygen to 2 water molecules using 4 electrons from cytochrome c in the IMS and 4 protons from the mitochondrial matrix. This chain is Cytochrome c oxidase subunit 2 (MT-CO2), found in Lycalopex sechurae (Sechuran desert fox).